The chain runs to 71 residues: Pseudonajatoxin b (71 aa).

5 disulfides stabilise this stretch: Cys3–Cys21, Cys14–Cys42, Cys27–Cys31, Cys46–Cys58, and Cys59–Cys64.

This sequence belongs to the three-finger toxin family. Long-chain subfamily. Type II alpha-neurotoxin sub-subfamily. Expressed by the venom gland.

It is found in the secreted. In terms of biological role, binds with high affinity to muscular (alpha-1/CHRNA1) and neuronal (alpha-7/CHRNA7) nicotinic acetylcholine receptor (nAChR) and inhibits acetylcholine from binding to the receptor, thereby impairing neuromuscular and neuronal transmission. This chain is Pseudonajatoxin b, found in Pseudonaja textilis (Eastern brown snake).